The following is a 530-amino-acid chain: Tyrosinase (530 aa).

The N-terminal stretch at Met1–Ala17 is a signal peptide. Residues His19–Arg473 are Lumenal, melanosome-facing. N-linked (GlcNAc...) asparagine glycosylation is present at Asn86. The Cu cation site is built by His180, His202, and His211. N-linked (GlcNAc...) asparagine glycosylation is found at Asn230, Asn290, and Asn337. Residues His363 and His367 each contribute to the Cu cation site. Residue Asn371 is glycosylated (N-linked (GlcNAc...) asparagine). His390 is a Cu cation binding site. A helical transmembrane segment spans residues Ile474–Gly494. Residues Leu495–Leu530 lie on the Cytoplasmic side of the membrane.

This sequence belongs to the tyrosinase family. In terms of assembly, forms an OPN3-dependent complex with DCT in response to blue light in melanocytes. Requires Cu(2+) as cofactor. Glycosylated.

It is found in the melanosome membrane. The protein localises to the melanosome. It catalyses the reaction 2 L-dopa + O2 = 2 L-dopaquinone + 2 H2O. It carries out the reaction L-tyrosine + O2 = L-dopaquinone + H2O. The catalysed reaction is 2 5,6-dihydroxyindole-2-carboxylate + O2 = 2 indole-5,6-quinone-2-carboxylate + 2 H2O. Its function is as follows. This is a copper-containing oxidase that functions in the formation of pigments such as melanins and other polyphenolic compounds. Catalyzes the initial and rate limiting step in the cascade of reactions leading to melanin production from tyrosine. In addition to hydroxylating tyrosine to DOPA (3,4-dihydroxyphenylalanine), also catalyzes the oxidation of DOPA to DOPA-quinone, and possibly the oxidation of DHI (5,6-dihydroxyindole) to indole-5,6 quinone. This chain is Tyrosinase (TYR), found in Bos taurus (Bovine).